The sequence spans 433 residues: GTPase Obg (433 aa).

Positions 1 to 158 constitute an Obg domain; that stretch reads MFVDQVKIYV…RNVILELKLL (158 aa). The region spanning 159 to 329 is the OBG-type G domain; sequence ADVGLVGFPS…LLFAIADLLE (171 aa). GTP is bound by residues 165 to 172, 190 to 194, 212 to 215, 282 to 285, and 310 to 312; these read GFPSVGKS, FTTLV, DLPG, NKMD, and SAA. Residues S172 and T192 each contribute to the Mg(2+) site. Residues 350-428 form the OCT domain; sequence KYEKEELPFT…LLDYEFEFVD (79 aa).

This sequence belongs to the TRAFAC class OBG-HflX-like GTPase superfamily. OBG GTPase family. In terms of assembly, monomer. Mg(2+) serves as cofactor.

Its subcellular location is the cytoplasm. An essential GTPase which binds GTP, GDP and possibly (p)ppGpp with moderate affinity, with high nucleotide exchange rates and a fairly low GTP hydrolysis rate. Plays a role in control of the cell cycle, stress response, ribosome biogenesis and in those bacteria that undergo differentiation, in morphogenesis control. The chain is GTPase Obg from Geobacillus thermodenitrificans (strain NG80-2).